The chain runs to 117 residues: Immunoglobulin heavy variable 1-69D (117 aa).

Residues 1 to 19 (MDWTWRFLFVVAAATGVQS) form the signal peptide. Residue Q20 is modified to Pyrrolidone carboxylic acid. Positions 20–44 (QVQLVQSGAEVKKPGSSVKVSCKAS) are framework-1. One can recognise an Ig-like domain in the interval 20 to 117 (QVQLVQSGAE…EDTAVYYCAR (98 aa)). C41 and C115 are oxidised to a cystine. The complementarity-determining-1 stretch occupies residues 45-52 (GGTFSSYA). The interval 53–69 (ISWVRQAPGQGLEWMGG) is framework-2. A complementarity-determining-2 region spans residues 70-77 (IIPIFGTA). The interval 78–115 (NYAQKFQGRVTITADESTSTAYMELSSLRSEDTAVYYC) is framework-3. The interval 116–117 (AR) is complementarity-determining-3.

In terms of assembly, immunoglobulins are composed of two identical heavy chains and two identical light chains; disulfide-linked.

The protein localises to the secreted. It localises to the cell membrane. V region of the variable domain of immunoglobulin heavy chains that participates in the antigen recognition. Immunoglobulins, also known as antibodies, are membrane-bound or secreted glycoproteins produced by B lymphocytes. In the recognition phase of humoral immunity, the membrane-bound immunoglobulins serve as receptors which, upon binding of a specific antigen, trigger the clonal expansion and differentiation of B lymphocytes into immunoglobulins-secreting plasma cells. Secreted immunoglobulins mediate the effector phase of humoral immunity, which results in the elimination of bound antigens. The antigen binding site is formed by the variable domain of one heavy chain, together with that of its associated light chain. Thus, each immunoglobulin has two antigen binding sites with remarkable affinity for a particular antigen. The variable domains are assembled by a process called V-(D)-J rearrangement and can then be subjected to somatic hypermutations which, after exposure to antigen and selection, allow affinity maturation for a particular antigen. The polypeptide is Immunoglobulin heavy variable 1-69D (Homo sapiens (Human)).